A 255-amino-acid chain; its full sequence is uncharacterized protein (255 aa).

The HTH deoR-type domain maps to 3–58 (PVERRQIILEMVAEKGIVSIAELTDRMNVSHMTIRRDLQKLEQQGAVVLVSGGVQS). A DNA-binding region (H-T-H motif) is located at residues 20 to 39 (VSIAELTDRMNVSHMTIRRD).

This is an uncharacterized protein from Escherichia coli (strain K12).